The sequence spans 133 residues: MSAEKEYILDEISQHTTTESCWLIIGNASNGGPKVYDVTKYLDDHPGGAEVMLDVAGQDADEFFEDIGHSKEARAELKNYLVGNFKIDAATLAKMKADAEAKAQQKNSGTGIMLIVLMALFAIAYGYYQTQMK.

The 83-residue stretch at 4 to 86 (EKEYILDEIS…LKNYLVGNFK (83 aa)) folds into the Cytochrome b5 heme-binding domain. Heme contacts are provided by histidine 45 and histidine 69. A helical transmembrane segment spans residues 108 to 128 (SGTGIMLIVLMALFAIAYGYY).

The protein belongs to the cytochrome b5 family. Interacts with alternative squalene epoxidase PHATRDRAFT_45494.

The protein localises to the endoplasmic reticulum membrane. In terms of biological role, hemoprotein that functions as an electron carrier for membrane bound monooxygenases involved in sterol biosynthesis. This is Cytochrome b5 from Phaeodactylum tricornutum (strain CCAP 1055/1).